A 57-amino-acid chain; its full sequence is MAKKKGEGPGLMSSAGLMRYFESEETSIKLDPKMVIGAGIASGVAIMALNITFGLWP.

At 1–31 (MAKKKGEGPGLMSSAGLMRYFESEETSIKLD) the chain is on the cytoplasmic side. A helical transmembrane segment spans residues 32 to 53 (PKMVIGAGIASGVAIMALNITF). At 54-57 (GLWP) the chain is on the extracellular side.

It belongs to the SEC61-beta family. As to quaternary structure, component of the protein translocase complex. Heterotrimer consisting of alpha (SecY), beta (SecG) and gamma (SecE) subunits. Can form oligomers of the heterotrimer.

The protein resides in the cell membrane. Involved in protein export. The function of the beta subunit is unknown, but it may be involved in stabilization of the trimeric complex. This Methanothrix thermoacetophila (strain DSM 6194 / JCM 14653 / NBRC 101360 / PT) (Methanosaeta thermophila) protein is Preprotein translocase subunit SecG.